Reading from the N-terminus, the 346-residue chain is MANAYKQAGVDIEAGYEAVSRMKKHVQTTMRKEVLGGLGGFGGMFDLSKFALEEPVLVSGTDGVGTKLMLAFMADKHDTIGIDAVAMCVNDIVVQGAEPLFFLDYIACGKAEPSKIENIVKGISEGCRQAGCALIGGETAEMPGMYSTEEYDLAGFTVGIVDKKKIVTGEKIEAGHVLIGLASSGIHSNGYSLVRKVLLEDGELSLDRIYGRLELPLGEELLKPTKIYVKPILELLKNHEVYGMAHITGGGFIENIPRMLPEGIGAEIELGSWKIQPIFSLLQEVGKLEEKEMFNIFNMGIGMVVAVKEEDAKDIVRLLEEQGETARIIGRTVQGAGVTFNGGKAL.

The protein belongs to the AIR synthase family.

It localises to the cytoplasm. The catalysed reaction is 2-formamido-N(1)-(5-O-phospho-beta-D-ribosyl)acetamidine + ATP = 5-amino-1-(5-phospho-beta-D-ribosyl)imidazole + ADP + phosphate + H(+). It functions in the pathway purine metabolism; IMP biosynthesis via de novo pathway; 5-amino-1-(5-phospho-D-ribosyl)imidazole from N(2)-formyl-N(1)-(5-phospho-D-ribosyl)glycinamide: step 2/2. This is Phosphoribosylformylglycinamidine cyclo-ligase from Bacillus anthracis (strain A0248).